A 192-amino-acid chain; its full sequence is Soluble inorganic pyrophosphatase 2 (192 aa).

Residues K38, R52, and Y64 each coordinate substrate. Positions 74, 79, and 111 each coordinate Mg(2+). Substrate is bound at residue Y148.

Monomer. Mg(2+) serves as cofactor. In terms of processing, the N-terminus is blocked.

It is found in the mitochondrion. The enzyme catalyses diphosphate + H2O = 2 phosphate + H(+). The sequence is that of Soluble inorganic pyrophosphatase 2 (ppa2) from Chlamydomonas reinhardtii (Chlamydomonas smithii).